We begin with the raw amino-acid sequence, 431 residues long: Histidinol dehydrogenase (431 aa).

NAD(+)-binding residues include tyrosine 127, glutamine 185, and asparagine 208. The substrate site is built by serine 234, glutamine 256, and histidine 259. Residues glutamine 256 and histidine 259 each contribute to the Zn(2+) site. Active-site proton acceptor residues include glutamate 323 and histidine 324. Residues histidine 324, aspartate 357, glutamate 411, and histidine 416 each coordinate substrate. Residue aspartate 357 participates in Zn(2+) binding. Histidine 416 contributes to the Zn(2+) binding site.

It belongs to the histidinol dehydrogenase family. The cofactor is Zn(2+).

The enzyme catalyses L-histidinol + 2 NAD(+) + H2O = L-histidine + 2 NADH + 3 H(+). It participates in amino-acid biosynthesis; L-histidine biosynthesis; L-histidine from 5-phospho-alpha-D-ribose 1-diphosphate: step 9/9. Its function is as follows. Catalyzes the sequential NAD-dependent oxidations of L-histidinol to L-histidinaldehyde and then to L-histidine. This Vibrio vulnificus (strain YJ016) protein is Histidinol dehydrogenase.